The following is a 262-amino-acid chain: Elongator complex protein 5 (262 aa).

2 disordered regions span residues 181 to 214 (TPLDGGLPAGASPKQPSPEAEQTTEPASSTFKIE) and 229 to 262 (PYERTSEPSEGNIIYTPDADDDFDEEDPDEDLCI). The span at 200 to 211 (AEQTTEPASSTF) shows a compositional bias: polar residues. Residues 246 to 262 (DADDDFDEEDPDEDLCI) are compositionally biased toward acidic residues.

It belongs to the ELP5 family. In terms of assembly, component of the elongator complex composed of Elp1, Elp2, Elp3, Elp4, Elp5 and Elp6. The elongator complex associates with and stabilizes microtubules; efficient interaction requires the full complex.

The protein resides in the cytoplasm. It is found in the nucleus. The protein localises to the cytoskeleton. It localises to the spindle. It participates in tRNA modification; 5-methoxycarbonylmethyl-2-thiouridine-tRNA biosynthesis. Its function is as follows. Component of the elongator complex, which is required for multiple tRNA modifications, including mcm5U (5-methoxycarbonylmethyl uridine), mcm5s2U (5-methoxycarbonylmethyl-2-thiouridine), and ncm5U (5-carbamoylmethyl uridine). The elongator complex catalyzes the formation of carboxymethyluridine in the wobble base at position 34 in tRNAs. Binding by the elongator complex stabilizes microtubules and promotes their growth. This induces central spindle asymmetry, promoting polarized signaling endosome trafficking during asymmetric cell division and cell fate assignation of sensory organ precursor cells. The protein is Elongator complex protein 5 of Drosophila melanogaster (Fruit fly).